The following is a 353-amino-acid chain: Uroporphyrinogen decarboxylase (353 aa).

Substrate contacts are provided by residues 30–34, Asp-79, Tyr-154, Ser-209, and His-332; that span reads RQAGR.

It belongs to the uroporphyrinogen decarboxylase family. Homodimer.

It localises to the cytoplasm. The catalysed reaction is uroporphyrinogen III + 4 H(+) = coproporphyrinogen III + 4 CO2. It functions in the pathway porphyrin-containing compound metabolism; protoporphyrin-IX biosynthesis; coproporphyrinogen-III from 5-aminolevulinate: step 4/4. Its function is as follows. Catalyzes the decarboxylation of four acetate groups of uroporphyrinogen-III to yield coproporphyrinogen-III. This is Uroporphyrinogen decarboxylase from Mycobacterium ulcerans (strain Agy99).